Here is a 341-residue protein sequence, read N- to C-terminus: Mitochondrial transcription factor 1 (341 aa).

4 residues coordinate S-adenosyl-L-methionine: Leu23, Glu77, Asp101, and Asn137.

The protein belongs to the class I-like SAM-binding methyltransferase superfamily. rRNA adenine N(6)-methyltransferase family.

Its subcellular location is the mitochondrion intermembrane space. Its function is as follows. Mitochondrial transcription factor that confers selective promoter recognition on the core subunit of the yeast mitochondrial RNA polymerase. Interacts with DNA in a non-specific manner. This chain is Mitochondrial transcription factor 1 (MTF1), found in Saccharomyces cerevisiae (strain ATCC 204508 / S288c) (Baker's yeast).